A 235-amino-acid polypeptide reads, in one-letter code: Ribonuclease 3 (235 aa).

The 125-residue stretch at 7 to 131 folds into the RNase III domain; that stretch reads LSALEARIGH…IIGAVFLDGG (125 aa). Glu45 is a binding site for Mg(2+). The active site involves Asp49. The Mg(2+) site is built by Asp117 and Glu120. Residue Glu120 is part of the active site. One can recognise a DRBM domain in the interval 156-225; the sequence is DPKTTLQEWA…AAAFLTREKI (70 aa).

Belongs to the ribonuclease III family. In terms of assembly, homodimer. Mg(2+) is required as a cofactor.

The protein localises to the cytoplasm. The enzyme catalyses Endonucleolytic cleavage to 5'-phosphomonoester.. Its function is as follows. Digests double-stranded RNA. Involved in the processing of primary rRNA transcript to yield the immediate precursors to the large and small rRNAs (23S and 16S). Processes some mRNAs, and tRNAs when they are encoded in the rRNA operon. Processes pre-crRNA and tracrRNA of type II CRISPR loci if present in the organism. This chain is Ribonuclease 3, found in Methylocella silvestris (strain DSM 15510 / CIP 108128 / LMG 27833 / NCIMB 13906 / BL2).